A 148-amino-acid polypeptide reads, in one-letter code: Small ribosomal subunit protein bS16 (148 aa).

A disordered region spans residues 107-148 (AAARAAAGAEDRPATTPKKAKKAASADGADAPAADAPTAAGQ). The segment covering 129–148 (AASADGADAPAADAPTAAGQ) has biased composition (low complexity).

This sequence belongs to the bacterial ribosomal protein bS16 family.

This Frankia alni (strain DSM 45986 / CECT 9034 / ACN14a) protein is Small ribosomal subunit protein bS16.